A 209-amino-acid chain; its full sequence is Phosphoheptose isomerase (209 aa).

In terms of domain architecture, SIS spans 50–209 (IAETFRNGGK…ELVESMMGYA (160 aa)). 65–67 (NGG) contributes to the substrate binding site. Positions 74 and 78 each coordinate Zn(2+). Substrate contacts are provided by residues E78, 109–110 (ND), 135–137 (STS), S140, and Q188. Zn(2+)-binding residues include Q188 and H196.

This sequence belongs to the SIS family. GmhA subfamily. Zn(2+) is required as a cofactor.

The protein resides in the cytoplasm. The enzyme catalyses 2 D-sedoheptulose 7-phosphate = D-glycero-alpha-D-manno-heptose 7-phosphate + D-glycero-beta-D-manno-heptose 7-phosphate. The protein operates within carbohydrate biosynthesis; D-glycero-D-manno-heptose 7-phosphate biosynthesis; D-glycero-alpha-D-manno-heptose 7-phosphate and D-glycero-beta-D-manno-heptose 7-phosphate from sedoheptulose 7-phosphate: step 1/1. In terms of biological role, catalyzes the isomerization of sedoheptulose 7-phosphate in D-glycero-D-manno-heptose 7-phosphate. The polypeptide is Phosphoheptose isomerase (Chlorobaculum parvum (strain DSM 263 / NCIMB 8327) (Chlorobium vibrioforme subsp. thiosulfatophilum)).